The primary structure comprises 370 residues: Coproporphyrin III ferrochelatase (370 aa).

Fe-coproporphyrin III is bound by residues serine 58 and tyrosine 127. Fe(2+)-binding residues include histidine 189 and glutamate 276.

This sequence belongs to the ferrochelatase family.

The protein localises to the cytoplasm. It catalyses the reaction Fe-coproporphyrin III + 2 H(+) = coproporphyrin III + Fe(2+). It functions in the pathway porphyrin-containing compound metabolism; protoheme biosynthesis. Its function is as follows. Involved in coproporphyrin-dependent heme b biosynthesis. Catalyzes the insertion of ferrous iron into coproporphyrin III to form Fe-coproporphyrin III. This chain is Coproporphyrin III ferrochelatase, found in Corynebacterium glutamicum (strain R).